Consider the following 362-residue polypeptide: Methylthioribose-1-phosphate isomerase (362 aa).

Residues 53 to 55, R90, and Q201 contribute to the substrate site; that span reads RGA. D241 acts as the Proton donor in catalysis. 251–252 serves as a coordination point for substrate; the sequence is NK.

The protein belongs to the eIF-2B alpha/beta/delta subunits family. MtnA subfamily.

The catalysed reaction is 5-(methylsulfanyl)-alpha-D-ribose 1-phosphate = 5-(methylsulfanyl)-D-ribulose 1-phosphate. The protein operates within amino-acid biosynthesis; L-methionine biosynthesis via salvage pathway; L-methionine from S-methyl-5-thio-alpha-D-ribose 1-phosphate: step 1/6. Catalyzes the interconversion of methylthioribose-1-phosphate (MTR-1-P) into methylthioribulose-1-phosphate (MTRu-1-P). The sequence is that of Methylthioribose-1-phosphate isomerase from Dechloromonas aromatica (strain RCB).